We begin with the raw amino-acid sequence, 342 residues long: Anthranilate phosphoribosyltransferase (342 aa).

5-phospho-alpha-D-ribose 1-diphosphate-binding positions include glycine 79, 82–83 (GD), threonine 87, 89–92 (NVST), 107–115 (KHGNRAATS), and serine 119. Glycine 79 contributes to the anthranilate binding site. Serine 91 contributes to the Mg(2+) binding site. Residue asparagine 110 participates in anthranilate binding. Anthranilate is bound at residue arginine 165. Mg(2+)-binding residues include aspartate 224 and glutamate 225.

It belongs to the anthranilate phosphoribosyltransferase family. In terms of assembly, homodimer. The cofactor is Mg(2+).

It catalyses the reaction N-(5-phospho-beta-D-ribosyl)anthranilate + diphosphate = 5-phospho-alpha-D-ribose 1-diphosphate + anthranilate. It functions in the pathway amino-acid biosynthesis; L-tryptophan biosynthesis; L-tryptophan from chorismate: step 2/5. In terms of biological role, catalyzes the transfer of the phosphoribosyl group of 5-phosphorylribose-1-pyrophosphate (PRPP) to anthranilate to yield N-(5'-phosphoribosyl)-anthranilate (PRA). The chain is Anthranilate phosphoribosyltransferase from Rubrobacter xylanophilus (strain DSM 9941 / JCM 11954 / NBRC 16129 / PRD-1).